Reading from the N-terminus, the 1661-residue chain is Pentafunctional AROM polypeptide (1661 aa).

A 3-dehydroquinate synthase region spans residues 1-388 (MATNGVKAEP…YEKKASSVVD (388 aa)). Residues 50 to 52 (DTN), 87 to 90 (ETSK), 118 to 120 (GGV), and Asp123 each bind NAD(+). A 7-phospho-2-dehydro-3-deoxy-D-arabino-heptonate-binding site is contributed by Arg134. An NAD(+)-binding site is contributed by 143 to 144 (TT). 7-phospho-2-dehydro-3-deoxy-D-arabino-heptonate contacts are provided by Asp150 and Lys156. Lys165 is an NAD(+) binding site. Asn166 contributes to the 7-phospho-2-dehydro-3-deoxy-D-arabino-heptonate binding site. NAD(+) is bound by residues 183-186 (FLET) and Asn194. Glu198 provides a ligand contact to Zn(2+). 7-phospho-2-dehydro-3-deoxy-D-arabino-heptonate-binding positions include 198–201 (EVVK) and Lys254. Glu264 acts as the Proton acceptor; for 3-dehydroquinate synthase activity in catalysis. Residues 268–272 (RNLLN) and His275 contribute to the 7-phospho-2-dehydro-3-deoxy-D-arabino-heptonate site. His275 provides a ligand contact to Zn(2+). His279 acts as the Proton acceptor; for 3-dehydroquinate synthase activity in catalysis. His291 and Lys360 together coordinate 7-phospho-2-dehydro-3-deoxy-D-arabino-heptonate. Residue His291 coordinates Zn(2+). The EPSP synthase stretch occupies residues 401-850 (VHPGIPSDLN…WDILNQQFKA (450 aa)). Residue Cys832 is the For EPSP synthase activity of the active site. The shikimate kinase stretch occupies residues 872 to 1064 (QKSIFIIGMR…KKKKQSFFVC (193 aa)). ATP is bound at residue 879–886 (GMRGAGKT). A 3-dehydroquinase region spans residues 1065 to 1285 (LSAPNLEPCA…TAPGQLSAAD (221 aa)). His1188 acts as the Proton acceptor; for 3-dehydroquinate dehydratase activity in catalysis. Lys1216 (schiff-base intermediate with substrate; for 3-dehydroquinate dehydratase activity) is an active-site residue. Residues 1298-1661 (TKKFCIFGSP…LTYSWSLGDW (364 aa)) form a shikimate dehydrogenase region.

The protein in the N-terminal section; belongs to the sugar phosphate cyclases superfamily. Dehydroquinate synthase family. In the 2nd section; belongs to the EPSP synthase family. It in the 3rd section; belongs to the shikimate kinase family. This sequence in the 4th section; belongs to the type-I 3-dehydroquinase family. The protein in the C-terminal section; belongs to the shikimate dehydrogenase family. Homodimer. Requires Zn(2+) as cofactor.

The protein localises to the cytoplasm. It carries out the reaction 7-phospho-2-dehydro-3-deoxy-D-arabino-heptonate = 3-dehydroquinate + phosphate. The catalysed reaction is 3-dehydroquinate = 3-dehydroshikimate + H2O. The enzyme catalyses shikimate + NADP(+) = 3-dehydroshikimate + NADPH + H(+). It catalyses the reaction shikimate + ATP = 3-phosphoshikimate + ADP + H(+). It carries out the reaction 3-phosphoshikimate + phosphoenolpyruvate = 5-O-(1-carboxyvinyl)-3-phosphoshikimate + phosphate. The protein operates within metabolic intermediate biosynthesis; chorismate biosynthesis; chorismate from D-erythrose 4-phosphate and phosphoenolpyruvate: step 2/7. It participates in metabolic intermediate biosynthesis; chorismate biosynthesis; chorismate from D-erythrose 4-phosphate and phosphoenolpyruvate: step 3/7. It functions in the pathway metabolic intermediate biosynthesis; chorismate biosynthesis; chorismate from D-erythrose 4-phosphate and phosphoenolpyruvate: step 4/7. Its pathway is metabolic intermediate biosynthesis; chorismate biosynthesis; chorismate from D-erythrose 4-phosphate and phosphoenolpyruvate: step 5/7. The protein operates within metabolic intermediate biosynthesis; chorismate biosynthesis; chorismate from D-erythrose 4-phosphate and phosphoenolpyruvate: step 6/7. Functionally, the AROM polypeptide catalyzes 5 consecutive enzymatic reactions in prechorismate polyaromatic amino acid biosynthesis. This chain is Pentafunctional AROM polypeptide, found in Phaeosphaeria nodorum (strain SN15 / ATCC MYA-4574 / FGSC 10173) (Glume blotch fungus).